A 270-amino-acid polypeptide reads, in one-letter code: Transcription factor bHLH113 (270 aa).

Positions 109-153 (CTVDKSTKSSTKKRTGTGNGQESDQNRKPGKKGKRNQEKSSVGIA) are disordered. Positions 144 to 193 (NQEKSSVGIAKVRKERLGERIAALQQLVSPYGKTDAASVLHEAMGYIKFL) constitute a bHLH domain.

As to quaternary structure, homodimer.

It is found in the nucleus. In Arabidopsis thaliana (Mouse-ear cress), this protein is Transcription factor bHLH113 (BHLH113).